The primary structure comprises 359 residues: 5-amino-6-(D-ribitylamino)uracil--L-tyrosine 4-hydroxyphenyl transferase (359 aa).

Residues 45–282 form the Radical SAM core domain; the sequence is VTYVLNANIN…VYAISRIFFK (238 aa). The [4Fe-4S] cluster site is built by Cys-59, Cys-63, and Cys-66.

It belongs to the radical SAM superfamily. CofH family. As to quaternary structure, consists of two subunits, CofG and CofH. It depends on [4Fe-4S] cluster as a cofactor.

The enzyme catalyses 5-amino-6-(D-ribitylamino)uracil + L-tyrosine + S-adenosyl-L-methionine = 5-amino-5-(4-hydroxybenzyl)-6-(D-ribitylimino)-5,6-dihydrouracil + 2-iminoacetate + 5'-deoxyadenosine + L-methionine + H(+). The protein operates within cofactor biosynthesis; coenzyme F0 biosynthesis. Functionally, catalyzes the radical-mediated synthesis of 5-amino-5-(4-hydroxybenzyl)-6-(D-ribitylimino)-5,6-dihydrouracil from 5-amino-6-(D-ribitylamino)uracil and L-tyrosine. The sequence is that of 5-amino-6-(D-ribitylamino)uracil--L-tyrosine 4-hydroxyphenyl transferase from Methanococcus vannielii (strain ATCC 35089 / DSM 1224 / JCM 13029 / OCM 148 / SB).